A 426-amino-acid polypeptide reads, in one-letter code: Serine--tRNA ligase (426 aa).

230 to 232 (TAE) is a binding site for L-serine. 261 to 263 (RSE) lines the ATP pocket. Glu-284 contributes to the L-serine binding site. 348–351 (EISS) is an ATP binding site. An L-serine-binding site is contributed by Ser-384.

Belongs to the class-II aminoacyl-tRNA synthetase family. Type-1 seryl-tRNA synthetase subfamily. Homodimer. The tRNA molecule binds across the dimer.

It localises to the cytoplasm. The catalysed reaction is tRNA(Ser) + L-serine + ATP = L-seryl-tRNA(Ser) + AMP + diphosphate + H(+). It carries out the reaction tRNA(Sec) + L-serine + ATP = L-seryl-tRNA(Sec) + AMP + diphosphate + H(+). It participates in aminoacyl-tRNA biosynthesis; selenocysteinyl-tRNA(Sec) biosynthesis; L-seryl-tRNA(Sec) from L-serine and tRNA(Sec): step 1/1. In terms of biological role, catalyzes the attachment of serine to tRNA(Ser). Is also able to aminoacylate tRNA(Sec) with serine, to form the misacylated tRNA L-seryl-tRNA(Sec), which will be further converted into selenocysteinyl-tRNA(Sec). The polypeptide is Serine--tRNA ligase (Erythrobacter litoralis (strain HTCC2594)).